The sequence spans 302 residues: tRNA pseudouridine synthase B (302 aa).

The active-site Nucleophile is Asp47.

The protein belongs to the pseudouridine synthase TruB family. Type 1 subfamily.

The enzyme catalyses uridine(55) in tRNA = pseudouridine(55) in tRNA. In terms of biological role, responsible for synthesis of pseudouridine from uracil-55 in the psi GC loop of transfer RNAs. The sequence is that of tRNA pseudouridine synthase B from Ruegeria sp. (strain TM1040) (Silicibacter sp.).